The primary structure comprises 406 residues: RILP-like protein 1 (406 aa).

Residue serine 7 is modified to Phosphoserine. The 88-residue stretch at 10–97 (AALSALEKNV…RVERMDRIEK (88 aa)) folds into the RH1 domain. Cysteine 47 carries the post-translational modification S-nitrosocysteine. Positions 76–258 (ELDELRLELD…KLRERLQGEH (183 aa)) form a coiled coil. 2 disordered regions span residues 255–280 (QGEH…ESIS) and 330–354 (EIEE…QPES). At serine 259 the chain carries Phosphoserine. A compositionally biased stretch (acidic residues) spans 262-280 (GEEEEAEIPPQPDGEESIS). The region spanning 294-359 (RPRFTLQELR…PQPESGIKRL (66 aa)) is the RH2 domain.

Belongs to the RILPL family. In terms of assembly, interacts (when S-nitrosylated) with GAPDH. Interacts with RAB8A; interaction is dependent on the phosphorylation of 'Thr-72' of RAB8A. Interacts with RAB10 and RAB12; the interaction is dependent on the phosphorylation of 'Thr-73' of RAB10, and 'Ser-105' of RAB12. S-nitrosylation is required for the interaction with GAPDH. Highly expressed in heart, skeletal muscle, brain and lung (at protein level).

The protein resides in the cytoplasm. The protein localises to the cytosol. It is found in the cytoskeleton. It localises to the microtubule organizing center. Its subcellular location is the centrosome. The protein resides in the centriole. The protein localises to the cilium basal body. Plays a role in the regulation of cell shape and polarity. Plays a role in cellular protein transport, including protein transport away from primary cilia. Neuroprotective protein, which acts by sequestring GAPDH in the cytosol and prevent the apoptotic function of GAPDH in the nucleus. Competes with SIAH1 for binding GAPDH. Does not regulate lysosomal morphology and distribution. Binds to RAB10 following LRRK2-mediated RAB10 phosphorylation which leads to inhibition of ciliogenesis. The chain is RILP-like protein 1 (Rilpl1) from Rattus norvegicus (Rat).